Consider the following 357-residue polypeptide: Transactivator protein DR7 (357 aa).

The tract at residues 107–187 (LVGKDGAVYV…LLTVGGLCQT (81 aa)) is interaction with host p53.

It belongs to the herpesviridae US22 family. In terms of assembly, interacts with host p53 and inhibits p53-activated transcription.

Involved in transactivation. Displays transforming activity. In Homo sapiens (Human), this protein is Transactivator protein DR7 (DR7L).